A 1873-amino-acid polypeptide reads, in one-letter code: Ankyrin repeat domain-containing protein 31 (1873 aa).

Disordered stretches follow at residues 1–27 and 361–380; these read MEEG…SDLE and EPLS…DQET. A compositionally biased stretch (polar residues) spans 361–379; that stretch reads EPLSNKRNSNSVTNSSDQE. ANK repeat units follow at residues 488-517, 521-550, and 554-583; these read FGEN…NVNQ, AGWT…DVNI, and YQIT…DPLF. The tract at residues 707-740 is disordered; that stretch reads TGLRKGNLHNVKDPNTNVPKGIGRRKTQHKRTQV. The segment covering 728-737 has biased composition (basic residues); sequence IGRRKTQHKR. ANK repeat units lie at residues 1154 to 1183, 1187 to 1216, and 1220 to 1249; these read RGES…DVNL, AGWT…KVNC, and DGIL…NPNQ. Disordered stretches follow at residues 1242 to 1263, 1449 to 1482, 1512 to 1549, and 1606 to 1634; these read QNGA…EADD, RSEI…SGSM, FSGN…PSQP, and CDQD…ASES. Residues 1250 to 1263 show a composition bias toward basic and acidic residues; that stretch reads KDQKQKSALDEADD. Composition is skewed to polar residues over residues 1460–1482 and 1515–1525; these read ELTS…SGSM and NDMNSKQNGSD. The segment covering 1535 to 1544 has biased composition (basic and acidic residues); sequence RHSDGTEKNK. Polar residues predominate over residues 1621 to 1632; the sequence is KTSSQQSPTGAS. An RAMA domain is found at 1683–1778; sequence KKALNYSTAP…TYLGKELLRY (96 aa).

As to quaternary structure, interacts with REC114; the interaction is direct. Interacts with IHO1.

It localises to the nucleus. Its subcellular location is the chromosome. Functionally, required for DNA double-strand breaks (DSBs) formation during meiotic recombination. Regulates the spatial and temporal patterns of pre-DSB recombinosome assembly and recombination activity by acting as a scaffold that anchors REC114 and other factors to specific genomic locations, thereby regulating DSB formation. Plays a key role in recombination in the pseudoautosomal regions of sex chromosomes. In Homo sapiens (Human), this protein is Ankyrin repeat domain-containing protein 31.